The primary structure comprises 145 residues: Ribonuclease H (145 aa).

Positions S2–I143 constitute an RNase H type-1 domain. Mg(2+) is bound by residues D11, E49, D71, and D135.

The protein belongs to the RNase H family. In terms of assembly, monomer. The cofactor is Mg(2+).

It localises to the cytoplasm. The enzyme catalyses Endonucleolytic cleavage to 5'-phosphomonoester.. In terms of biological role, endonuclease that specifically degrades the RNA of RNA-DNA hybrids. This is Ribonuclease H from Wolbachia sp. subsp. Drosophila simulans (strain wRi).